Reading from the N-terminus, the 289-residue chain is ATP phosphoribosyltransferase (289 aa).

This sequence belongs to the ATP phosphoribosyltransferase family. Long subfamily. Requires Mg(2+) as cofactor.

Its subcellular location is the cytoplasm. The enzyme catalyses 1-(5-phospho-beta-D-ribosyl)-ATP + diphosphate = 5-phospho-alpha-D-ribose 1-diphosphate + ATP. It functions in the pathway amino-acid biosynthesis; L-histidine biosynthesis; L-histidine from 5-phospho-alpha-D-ribose 1-diphosphate: step 1/9. Feedback inhibited by histidine. Catalyzes the condensation of ATP and 5-phosphoribose 1-diphosphate to form N'-(5'-phosphoribosyl)-ATP (PR-ATP). Has a crucial role in the pathway because the rate of histidine biosynthesis seems to be controlled primarily by regulation of HisG enzymatic activity. The protein is ATP phosphoribosyltransferase of Pelotomaculum thermopropionicum (strain DSM 13744 / JCM 10971 / SI).